Reading from the N-terminus, the 776-residue chain is Reticulon-1 (776 aa).

Disordered regions lie at residues methionine 1–glutamate 101, serine 137–isoleucine 168, valine 205–valine 245, and leucine 285–proline 580. Serine 327 carries the post-translational modification Phosphoserine. Residues proline 328–serine 341 are compositionally biased toward low complexity. 3 positions are modified to phosphoserine: serine 350, serine 352, and serine 487. A compositionally biased stretch (basic and acidic residues) spans alanine 497–proline 511. The Reticulon domain occupies alanine 589–glutamate 776. The next 2 membrane-spanning stretches (helical) occupy residues isoleucine 603–valine 623 and phenylalanine 705–leucine 725.

As to quaternary structure, interacts with NDRG1. Interacts with BACE1. In terms of assembly, interacts with TMEM33. Interacts with UGCG; regulates the ceramide glucosyltransferase activity of UGCG. Post-translationally, isoforms RTN1-A and RTN1-B are phosphorylated. Expressed in neural and neuroendocrine tissues and cell cultures derived therefrom. Expression of isoform RTN1-C is strongly correlated with neuronal differentiation.

The protein resides in the endoplasmic reticulum membrane. It localises to the golgi apparatus membrane. Its function is as follows. Inhibits amyloid precursor protein processing, probably by blocking BACE1 activity. This Homo sapiens (Human) protein is Reticulon-1 (RTN1).